The primary structure comprises 495 residues: Fibronectin type III and SPRY domain-containing protein 1 (495 aa).

Residues 4 to 99 adopt a coiled-coil conformation; the sequence is QKESLRKIIT…ALESSEELLE (96 aa). One can recognise a COS domain in the interval 105–162; it reads LCSSENDSFTQAAKDIKDSVTMAPAFRLSLKAKASDSMNHMMVDFTHERNLLQSITFL. Residues 164–268 enclose the Fibronectin type-III domain; the sequence is VPATPEIHVA…EPVTLETHAF (105 aa). Residues 281–476 form the B30.2/SPRY domain; the sequence is LKVEDLSVEW…VQTGLQVPSI (196 aa). Positions 306-332 are disordered; it reads KNRTNSPMHSPARTAMMSPKRAPSARV. Ser-490 is subject to Phosphoserine.

In terms of assembly, oligomerization is required for binding to microtubules.

The protein resides in the cytoplasm. Its subcellular location is the cytoskeleton. It is found in the microtubule organizing center. It localises to the centrosome. The protein localises to the nucleus. The protein resides in the cleavage furrow. Functionally, may be involved in microtubule organization and stabilization. This Danio rerio (Zebrafish) protein is Fibronectin type III and SPRY domain-containing protein 1 (fsd1).